Reading from the N-terminus, the 218-residue chain is Octanoyltransferase (218 aa).

The 176-residue stretch at 34–209 (ETSRDELWIV…TFSQELGYQH (176 aa)) folds into the BPL/LPL catalytic domain. Residues 73 to 80 (RGGQVTYH), 140 to 142 (SLG), and 153 to 155 (GLA) each bind substrate. Catalysis depends on C171, which acts as the Acyl-thioester intermediate.

This sequence belongs to the LipB family.

Its subcellular location is the cytoplasm. It carries out the reaction octanoyl-[ACP] + L-lysyl-[protein] = N(6)-octanoyl-L-lysyl-[protein] + holo-[ACP] + H(+). The protein operates within protein modification; protein lipoylation via endogenous pathway; protein N(6)-(lipoyl)lysine from octanoyl-[acyl-carrier-protein]: step 1/2. In terms of biological role, catalyzes the transfer of endogenously produced octanoic acid from octanoyl-acyl-carrier-protein onto the lipoyl domains of lipoate-dependent enzymes. Lipoyl-ACP can also act as a substrate although octanoyl-ACP is likely to be the physiological substrate. The protein is Octanoyltransferase of Shewanella loihica (strain ATCC BAA-1088 / PV-4).